The chain runs to 197 residues: MKMDADSSGTQHRDSRGSRSRSRREREYHGRSSERDSRKKEHKIPYFADEVREQDRLRRLRQRAHQSTRRTRSRSRSQSSIRESRHRRHRQRSRSRNRSRSRSSERKRRQRSRSRSSERRRRQRSPHRYNPPPKIINYYVQVPPQDFYGMSGMQQSFGYQRLPRPPPFPPAPYRYRQRPPFIGVPRFGYRNAGRPPY.

2 stretches are compositionally biased toward basic and acidic residues: residues 1-17 and 24-39; these read MKMDADSSGTQHRDSRG and REREYHGRSSERDSRK. 2 disordered regions span residues 1–136 and 158–197; these read MKMD…PKII and GYQRLPRPPPFPPAPYRYRQRPPFIGVPRFGYRNAGRPPY. Basic residues-rich tracts occupy residues 58–75 and 84–127; these read RRLRQRAHQSTRRTRSRS and SRHR…RSPH. Positions 163-172 are enriched in pro residues; the sequence is PRPPPFPPAP.

Its subcellular location is the nucleus speckle. Member of the regulatory pathway controlling female somatic sexual differentiation, regulated by Sxl. Activates dsx female-specific splicing by promoting the formation of a splicing enhancer complex which consists of tra, tra2 and sr proteins. Together with tra-2, plays a role in switching fru splicing from the male-specific pattern to the female-specific pattern through activation of the female-specific fru 5'-splice site. No known function in males. The polypeptide is Female-specific protein transformer (tra) (Drosophila melanogaster (Fruit fly)).